Consider the following 391-residue polypeptide: 8-amino-7-oxononanoate synthase (391 aa).

Residue Arg19 participates in substrate binding. Residue 106–107 participates in pyridoxal 5'-phosphate binding; it reads GY. A substrate-binding site is contributed by His131. Positions 178, 206, and 234 each coordinate pyridoxal 5'-phosphate. Lys237 carries the N6-(pyridoxal phosphate)lysine modification. Thr353 is a substrate binding site.

This sequence belongs to the class-II pyridoxal-phosphate-dependent aminotransferase family. BioF subfamily. In terms of assembly, homodimer. It depends on pyridoxal 5'-phosphate as a cofactor.

The catalysed reaction is 6-carboxyhexanoyl-[ACP] + L-alanine + H(+) = (8S)-8-amino-7-oxononanoate + holo-[ACP] + CO2. It participates in cofactor biosynthesis; biotin biosynthesis. Functionally, catalyzes the decarboxylative condensation of pimeloyl-[acyl-carrier protein] and L-alanine to produce 8-amino-7-oxononanoate (AON), [acyl-carrier protein], and carbon dioxide. This is 8-amino-7-oxononanoate synthase from Geobacter metallireducens (strain ATCC 53774 / DSM 7210 / GS-15).